The sequence spans 440 residues: Beta-1,3-galactosyl-O-glycosyl-glycoprotein beta-1,6-N-acetylglucosaminyltransferase (440 aa).

The Cytoplasmic portion of the chain corresponds to methionine 1 to arginine 12. The chain crosses the membrane as a helical; Signal-anchor for type II membrane protein span at residues glycine 13–leucine 30. The Lumenal segment spans residues arginine 31 to leucine 440. N-linked (GlcNAc...) asparagine; by host glycosylation is found at asparagine 72 and asparagine 108. Disulfide bonds link cysteine 73-cysteine 230, cysteine 164-cysteine 384, cysteine 185-cysteine 212, and cysteine 393-cysteine 425.

The protein belongs to the glycosyltransferase 14 family.

It is found in the host Golgi apparatus membrane. It carries out the reaction a 3-O-[beta-D-galactosyl-(1-&gt;3)-N-acetyl-alpha-D-galactosaminyl]-L-seryl-[protein] + UDP-N-acetyl-alpha-D-glucosamine = 3-O-{beta-D-galactosyl-(1-&gt;3)-[N-acetyl-beta-D-glucosaminyl-(1-&gt;6)]-N-acetyl-alpha-D-galactosaminyl}-L-seryl-[protein] + UDP + H(+). The catalysed reaction is a 3-O-[beta-D-galactosyl-(1-&gt;3)-N-acetyl-alpha-D-galactosaminyl]-L-threonyl-[protein] + UDP-N-acetyl-alpha-D-glucosamine = a 3-O-{beta-D-galactosyl-(1-&gt;3)-[N-acetyl-beta-D-glucosaminyl-(1-&gt;6)]-N-acetyl-alpha-D-galactosaminyl}-L-threonyl-[protein] + UDP + H(+). The enzyme catalyses a beta-D-Gal-(1-&gt;4)-beta-D-GlcNAc-(1-&gt;3)-beta-D-Gal-(1-&gt;4)-beta-D-GlcNAc derivative + UDP-N-acetyl-alpha-D-glucosamine = a beta-D-Gal-(1-&gt;4)-beta-D-GlcNAc-(1-&gt;3)-[beta-D-GlcNAc-(1-&gt;6)]-beta-D-Gal-(1-&gt;4)-N-acetyl-beta-D-glucosaminyl derivative + UDP + H(+). It catalyses the reaction 3-O-[N-acetyl-beta-D-glucosaminyl-(1-&gt;3)-N-acetyl-alpha-D-galactosaminyl]-L-seryl-[protein] + UDP-N-acetyl-alpha-D-glucosamine = 3-O-[N-acetyl-beta-D-glucosaminyl-(1-&gt;3)-[N-acetyl-beta-D-glucosaminyl-(1-&gt;6)]-N-acetyl-alpha-D-galactosaminyl]-L-seryl-[protein] + UDP + H(+). It carries out the reaction a 3-O-[N-acetyl-beta-D-glucosaminyl-(1-&gt;3)-N-acetyl-alpha-D-galactosaminyl]-L-threonyl-[protein] + UDP-N-acetyl-alpha-D-glucosamine = 3-O-[N-acetyl-beta-D-glucosaminyl-(1-&gt;3)-[N-acetyl-beta-D-glucosaminyl-(1-&gt;6)]-N-acetyl-alpha-D-galactosaminyl]-L-threonyl-[protein] + UDP + H(+). It functions in the pathway protein modification; protein glycosylation. Its function is as follows. Non-essential glycosyltransferase that can synthesize all known mucin beta 6 N-acetylglucosaminides. Mediates core 2 and core 4 O-glycan branching, 2 important steps in mucin-type biosynthesis. Has also I-branching enzyme activity by converting linear into branched poly-N-acetyllactosaminoglycans. Contributes to the post-translational modifications of structural proteins. In Bos taurus (Bovine), this protein is Beta-1,3-galactosyl-O-glycosyl-glycoprotein beta-1,6-N-acetylglucosaminyltransferase (Bo17).